The primary structure comprises 331 residues: Beta-ketoacyl-[acyl-carrier-protein] synthase III (331 aa).

Residues C113 and H256 contribute to the active site. The ACP-binding stretch occupies residues 257–261 (QANKR). Residue N286 is part of the active site.

Belongs to the thiolase-like superfamily. FabH family. In terms of assembly, homodimer.

It is found in the cytoplasm. It catalyses the reaction malonyl-[ACP] + acetyl-CoA + H(+) = 3-oxobutanoyl-[ACP] + CO2 + CoA. Its pathway is lipid metabolism; fatty acid biosynthesis. Its function is as follows. Catalyzes the condensation reaction of fatty acid synthesis by the addition to an acyl acceptor of two carbons from malonyl-ACP. Catalyzes the first condensation reaction which initiates fatty acid synthesis and may therefore play a role in governing the total rate of fatty acid production. Possesses both acetoacetyl-ACP synthase and acetyl transacylase activities. Its substrate specificity determines the biosynthesis of branched-chain and/or straight-chain of fatty acids. This chain is Beta-ketoacyl-[acyl-carrier-protein] synthase III, found in Solibacter usitatus (strain Ellin6076).